Consider the following 241-residue polypeptide: Orotidine 5'-phosphate decarboxylase (241 aa).

Residues Asp-15, Lys-36, 63–72 (DLKFHDIPNT), Thr-127, Arg-189, Gln-198, Gly-218, and Arg-219 contribute to the substrate site. Lys-65 (proton donor) is an active-site residue.

This sequence belongs to the OMP decarboxylase family. Type 1 subfamily. As to quaternary structure, homodimer.

The enzyme catalyses orotidine 5'-phosphate + H(+) = UMP + CO2. The protein operates within pyrimidine metabolism; UMP biosynthesis via de novo pathway; UMP from orotate: step 2/2. Functionally, catalyzes the decarboxylation of orotidine 5'-monophosphate (OMP) to uridine 5'-monophosphate (UMP). The protein is Orotidine 5'-phosphate decarboxylase of Prochlorococcus marinus (strain MIT 9211).